The following is a 138-amino-acid chain: MMSNSQISKLFSSISNKENSNENALKESTNKQLNNANTLAITHLKEQLSREVQRREELEGLLEQSQKEMEDLSVSLFTEANEMVAKARQDTEVLKRELDYLRAKEKGRIGKLRSIQTAVRTSIEARKLLSYSNESNYH.

Polar residues predominate over residues Met-1–Phe-11. Positions Met-1–Lys-31 are disordered. Over residues Ser-12–Asn-23 the composition is skewed to low complexity. Residues Asn-16–Lys-104 are a coiled coil.

As to quaternary structure, interacts with spo2.

It localises to the cytoplasm. The protein resides in the cytoskeleton. Its subcellular location is the microtubule organizing center. It is found in the spindle pole body. In terms of biological role, involved in sporulation. Plays a significant role in modification of the spindle pole body prior to spore formation and is required for initiating forespore membrane formation. This Schizosaccharomyces pombe (strain 972 / ATCC 24843) (Fission yeast) protein is Sporulation-specific protein 13 (spo13).